An 881-amino-acid polypeptide reads, in one-letter code: Translation initiation factor IF-2 (881 aa).

Disordered stretches follow at residues arginine 53–threonine 92 and alanine 163–proline 292. Residues glutamate 81–threonine 92 show a composition bias toward polar residues. The segment covering glutamate 172 to alanine 186 has biased composition (low complexity). The segment covering arginine 219 to glycine 236 has biased composition (basic and acidic residues). Over residues glycine 254–glycine 263 the composition is skewed to low complexity. The tr-type G domain occupies glutamine 380–lysine 549. The G1 stretch occupies residues glycine 389–threonine 396. Glycine 389–threonine 396 serves as a coordination point for GTP. The segment at glycine 414 to histidine 418 is G2. Residues aspartate 435 to glycine 438 form a G3 region. GTP-binding positions include aspartate 435–histidine 439 and asparagine 489–aspartate 492. Positions asparagine 489–aspartate 492 are G4. Positions serine 525–lysine 527 are G5.

Belongs to the TRAFAC class translation factor GTPase superfamily. Classic translation factor GTPase family. IF-2 subfamily.

The protein resides in the cytoplasm. Its function is as follows. One of the essential components for the initiation of protein synthesis. Protects formylmethionyl-tRNA from spontaneous hydrolysis and promotes its binding to the 30S ribosomal subunits. Also involved in the hydrolysis of GTP during the formation of the 70S ribosomal complex. In Stenotrophomonas maltophilia (strain K279a), this protein is Translation initiation factor IF-2.